A 188-amino-acid chain; its full sequence is Large ribosomal subunit protein uL5 (188 aa).

This sequence belongs to the universal ribosomal protein uL5 family. Part of the 50S ribosomal subunit; part of the 5S rRNA/L5/L18/L25 subcomplex. Contacts the 5S rRNA and the P site tRNA. Forms a bridge to the 30S subunit in the 70S ribosome.

This is one of the proteins that bind and probably mediate the attachment of the 5S RNA into the large ribosomal subunit, where it forms part of the central protuberance. In the 70S ribosome it contacts protein S13 of the 30S subunit (bridge B1b), connecting the 2 subunits; this bridge is implicated in subunit movement. Contacts the P site tRNA; the 5S rRNA and some of its associated proteins might help stabilize positioning of ribosome-bound tRNAs. The protein is Large ribosomal subunit protein uL5 of Aquifex pyrophilus.